Consider the following 187-residue polypeptide: Probable chorismate pyruvate-lyase (187 aa).

Residues Arg77, Leu115, and Glu174 each contribute to the substrate site.

This sequence belongs to the UbiC family.

The protein localises to the cytoplasm. The enzyme catalyses chorismate = 4-hydroxybenzoate + pyruvate. It functions in the pathway cofactor biosynthesis; ubiquinone biosynthesis. Removes the pyruvyl group from chorismate, with concomitant aromatization of the ring, to provide 4-hydroxybenzoate (4HB) for the ubiquinone pathway. This Shewanella sp. (strain ANA-3) protein is Probable chorismate pyruvate-lyase.